A 546-amino-acid polypeptide reads, in one-letter code: Arginine--tRNA ligase (546 aa).

Positions 117-127 (ANPTGPLHIGR) match the 'HIGH' region motif.

This sequence belongs to the class-I aminoacyl-tRNA synthetase family.

It is found in the cytoplasm. The enzyme catalyses tRNA(Arg) + L-arginine + ATP = L-arginyl-tRNA(Arg) + AMP + diphosphate. The polypeptide is Arginine--tRNA ligase (Thermoplasma acidophilum (strain ATCC 25905 / DSM 1728 / JCM 9062 / NBRC 15155 / AMRC-C165)).